A 563-amino-acid polypeptide reads, in one-letter code: Pyruvate decarboxylase isozyme 1 (563 aa).

Ser-2 is modified (N-acetylserine). Residues Asp-28, His-115, and Tyr-157 each contribute to the pyruvate site. The residue at position 161 (Arg-161) is an Omega-N-methylarginine. Lys-212 participates in a covalent cross-link: Glycyl lysine isopeptide (Lys-Gly) (interchain with G-Cter in ubiquitin). The residue at position 223 (Ser-223) is a Phosphoserine. Arg-224 lines the pyruvate pocket. Lys-233 is covalently cross-linked (Glycyl lysine isopeptide (Lys-Gly) (interchain with G-Cter in ubiquitin)). Thr-266 carries the post-translational modification Phosphothreonine. Glycyl lysine isopeptide (Lys-Gly) (interchain with G-Cter in ubiquitin) cross-links involve residues Lys-269 and Lys-332. Phosphothreonine occurs at positions 336 and 353. Thiamine diphosphate is bound by residues Thr-390 and 413-415 (GSI). Asp-444 provides a ligand contact to Mg(2+). Thiamine diphosphate-binding positions include 445 to 446 (GS) and 471 to 476 (NDGYTI). Mg(2+)-binding residues include Asn-471 and Gly-473. Residue Glu-477 participates in pyruvate binding. Glycyl lysine isopeptide (Lys-Gly) (interchain with G-Cter in ubiquitin) cross-links involve residues Lys-484, Lys-505, and Lys-520. At Thr-522 the chain carries Phosphothreonine. The residue at position 526 (Ser-526) is a Phosphoserine.

The protein belongs to the TPP enzyme family. In terms of assembly, homotetramer. The cofactor is Mg(2+). It depends on thiamine diphosphate as a cofactor. In terms of processing, cleavage of N-terminal methionine and N-terminal acetylation by NAT1/ARD1.

It localises to the cytoplasm. It is found in the nucleus. The enzyme catalyses pyruvate + H(+) = acetaldehyde + CO2. It carries out the reaction 3-methyl-2-oxobutanoate + H(+) = 2-methylpropanal + CO2. It catalyses the reaction (S)-3-methyl-2-oxopentanoate + H(+) = 2-methylbutanal + CO2. The catalysed reaction is indole-3-pyruvate + H(+) = indole-3-acetaldehyde + CO2. The enzyme catalyses 3-phenylpyruvate + H(+) = 2-phenylacetaldehyde + CO2. It carries out the reaction 2-oxobutanoate + H(+) = propanal + CO2. It catalyses the reaction 2-oxopentanoate + H(+) = butanal + CO2. The catalysed reaction is 2 acetaldehyde = acetoin. The enzyme catalyses acetaldehyde + pyruvate + H(+) = acetoin + CO2. The protein operates within fermentation; ethanol fermentation. It functions in the pathway amino-acid degradation; Ehrlich pathway. Allosterically activated by its substrate, pyruvate. Major of three pyruvate decarboxylases (PDC1, PDC5, PDC6) implicated in the nonoxidative conversion of pyruvate to acetaldehyde and carbon dioxide during alcoholic fermentation. Most of the produced acetaldehyde is subsequently reduced to ethanol, but some is required for cytosolic acetyl-CoA production for biosynthetic pathways. The enzyme is also one of five 2-oxo acid decarboxylases (PDC1, PDC5, PDC6, ARO10, and THI3) able to decarboxylate more complex 2-oxo acids (alpha-ketoacids) than pyruvate, which seem mainly involved in amino acid catabolism. Here the enzyme catalyzes the decarboxylation of amino acids, which, in a first step, have been transaminated to the corresponding 2-oxo acids. In a third step, the resulting aldehydes are reduced to alcohols, collectively referred to as fusel oils or alcohols. Its preferred substrates are the transaminated amino acids derived from threonine (2-oxobutanoate), norvaline (2-oxopentanoate), valine (3-methyl-2-oxobutanoate, also alpha-keto-isovalerate), isoleucine ((3S)-3-methyl-2-oxopentanoate, also alpha-keto-beta-methylvalerate), phenylalanine (phenylpyruvate), and tryptophan (3-(indol-3-yl)pyruvate), whereas transaminated leucine is no substrate. In a side-reaction the carbanionic intermediate (or active aldehyde) generated by decarboxylation or by activation of an aldehyde can react with an aldehyde via condensation (or carboligation) yielding a 2-hydroxy ketone, collectively called acyloins. The chain is Pyruvate decarboxylase isozyme 1 from Saccharomyces cerevisiae (strain ATCC 204508 / S288c) (Baker's yeast).